A 442-amino-acid chain; its full sequence is CAAX prenyl protease 1 homolog (442 aa).

Over Met-1–His-62 the chain is Lumenal. Residues Leu-63–Gly-83 traverse the membrane as a helical segment. Tyr-84 is a topological domain (cytoplasmic). A helical transmembrane segment spans residues Tyr-85–Ile-105. The Lumenal portion of the chain corresponds to Asn-106–Lys-146. A helical membrane pass occupies residues Met-147–Asn-167. The Cytoplasmic segment spans residues Gly-168–Pro-170. A helical transmembrane segment spans residues Tyr-171–Tyr-191. Residues Pro-192–Thr-311 lie on the Lumenal side of the membrane. His-301 contributes to the Zn(2+) binding site. Glu-302 is an active-site residue. His-305 contacts Zn(2+). A helical transmembrane segment spans residues Leu-312–Phe-332. Topologically, residues Tyr-333–Pro-349 are cytoplasmic. The chain crosses the membrane as a helical span at residues Val-350–Ile-370. Topologically, residues Gly-371–Lys-442 are lumenal. Residue Glu-380 coordinates Zn(2+). Residue Asp-384 is the Proton donor of the active site.

This sequence belongs to the peptidase M48A family. Zn(2+) serves as cofactor.

The protein localises to the endoplasmic reticulum membrane. The protein resides in the membrane. It catalyses the reaction Hydrolyzes the peptide bond -P2-(S-farnesyl or geranylgeranyl)C-P1'-P2'-P3'-COOH where P1' and P2' are amino acids with aliphatic side chains and P3' is any C-terminal residue.. Proteolytically removes the C-terminal three residues of farnesylated proteins. This chain is CAAX prenyl protease 1 homolog, found in Caenorhabditis elegans.